The following is a 394-amino-acid chain: Suppressor APC domain-containing protein 2 (394 aa).

Disordered regions lie at residues methionine 1 to glycine 23, leucine 95 to phenylalanine 125, and glycine 150 to alanine 188. Over residues serine 177–alanine 188 the composition is skewed to polar residues. Threonine 219 bears the Phosphothreonine mark. Residues glycine 227–alanine 277 adopt a coiled-coil conformation. Residue serine 284 is modified to Phosphoserine. Residues glutamine 336–glutamine 384 are a coiled coil.

Interacts with a spindle orientation complex at least composed of GNAI1, GPSM2 and NUMA1. Interacts with GPSM2 (via TPR motifs); this interaction is required to prevent GPSM2 anchoring at the mitotic apical cortex and is inhibited in presence of NUMA1 in a dose dependent manner. Interacts with PARD3. Expressed in 5-month-old fetal tissues, including stomach, intestine, colon, liver, brain, lung, heart, spleen and kidney. Undetectable in non-cancerous adult tissues. Expressed in many primary gastric carcinoma, but almost not in adjacent normal mucosa. Expressed preferentially in M and G1 phases, compared to S and G2 phases. Expression is up-regulated in hepatocellular carcinoma (HCC) and colorectal cancer (CRC) tissues (at protein level).

The protein resides in the cytoplasm. It localises to the nucleus. It is found in the cell cortex. Its subcellular location is the apical cell membrane. The protein localises to the cell junction. The protein resides in the tight junction. Plays a role in planar mitotic spindle orientation in retinal progenitor cells (RPCs) and promotes the production of symmetric terminal divisions. Negatively regulates the mitotic apical cortex localization of GPSM2. Involved also in positive regulation of cell proliferation and tumor cell growth. The sequence is that of Suppressor APC domain-containing protein 2 from Homo sapiens (Human).